Here is a 551-residue protein sequence, read N- to C-terminus: Probable NADH-ubiquinone oxidoreductase C947.15c, mitochondrial (551 aa).

A mitochondrion-targeting transit peptide spans 1-35 (MSVSKARLQSVVRLSRTVPYSKTMVRSFHVSCAVK). Residue 92-122 (NIVVLGSGWGAVAAIKNLDPSLYNITLVSPR) participates in FAD binding. An NAD(+)-binding site is contributed by 255–291 (LHITVVGGGPTGMEFAAEMQDFIDNDVKDMFPELQKD).

The protein belongs to the NADH dehydrogenase family.

It is found in the mitochondrion. It catalyses the reaction a quinone + NADH + H(+) = a quinol + NAD(+). The enzyme catalyses a ubiquinone + NADH + H(+) = a ubiquinol + NAD(+). In terms of biological role, catalyzes the oxidation of NADH. The protein is Probable NADH-ubiquinone oxidoreductase C947.15c, mitochondrial of Schizosaccharomyces pombe (strain 972 / ATCC 24843) (Fission yeast).